We begin with the raw amino-acid sequence, 348 residues long: 3-isopropylmalate dehydrogenase (348 aa).

NAD(+) is bound at residue 76-87 (GPKWTDPNNRPE). The substrate site is built by Arg94, Arg104, Arg132, and Asp217. Residues Asp217, Asp241, and Asp245 each coordinate Mg(2+). Position 275-287 (275-287 (GSAPDIAGKNVAN)) interacts with NAD(+).

Belongs to the isocitrate and isopropylmalate dehydrogenases family. LeuB type 1 subfamily. Homodimer. Mg(2+) serves as cofactor. Mn(2+) is required as a cofactor.

Its subcellular location is the cytoplasm. The catalysed reaction is (2R,3S)-3-isopropylmalate + NAD(+) = 4-methyl-2-oxopentanoate + CO2 + NADH. It functions in the pathway amino-acid biosynthesis; L-leucine biosynthesis; L-leucine from 3-methyl-2-oxobutanoate: step 3/4. Catalyzes the oxidation of 3-carboxy-2-hydroxy-4-methylpentanoate (3-isopropylmalate) to 3-carboxy-4-methyl-2-oxopentanoate. The product decarboxylates to 4-methyl-2 oxopentanoate. The chain is 3-isopropylmalate dehydrogenase from Staphylococcus aureus (strain MRSA252).